The chain runs to 126 residues: Histone H2B 1.1 (126 aa).

Residues 1-12 are compositionally biased toward low complexity; the sequence is MPEPAKSAPAPK. A disordered region spans residues 1-35; it reads MPEPAKSAPAPKKGSKKAVTKTQKKDGKKRRKSRK. An N6-acetyllysine mark is found at lysine 6 and lysine 13. Residue serine 15 is modified to Phosphoserine. 2 positions are modified to N6-acetyllysine: lysine 16 and lysine 21. Serine 113 carries an O-linked (GlcNAc) serine glycan. Lysine 121 is covalently cross-linked (Glycyl lysine isopeptide (Lys-Gly) (interchain with G-Cter in ubiquitin)).

It belongs to the histone H2B family. The nucleosome is a histone octamer containing two molecules each of H2A, H2B, H3 and H4 assembled in one H3-H4 heterotetramer and two H2A-H2B heterodimers. The octamer wraps approximately 147 bp of DNA. Monoubiquitination of Lys-121 by BRE1 gives a specific tag for epigenetic transcriptional activation and is also prerequisite for histone H3 'Lys-4' and 'Lys-79' methylation. In terms of processing, phosphorylated on Ser-15 during developmentally programmed apoptosis; which may facilitate apoptotic chromatin condensation. Post-translationally, glcNAcylation at Ser-113 promotes monoubiquitination of Lys-121. It fluctuates in response to extracellular glucose, and associates with transcribed genes.

Its subcellular location is the nucleus. The protein resides in the chromosome. Core component of nucleosome. Nucleosomes wrap and compact DNA into chromatin, limiting DNA accessibility to the cellular machineries which require DNA as a template. Histones thereby play a central role in transcription regulation, DNA repair, DNA replication and chromosomal stability. DNA accessibility is regulated via a complex set of post-translational modifications of histones, also called histone code, and nucleosome remodeling. This chain is Histone H2B 1.1, found in Xenopus laevis (African clawed frog).